The primary structure comprises 430 residues: Asparagine--tRNA ligase (430 aa).

This sequence belongs to the class-II aminoacyl-tRNA synthetase family. Homodimer.

The protein localises to the cytoplasm. The enzyme catalyses tRNA(Asn) + L-asparagine + ATP = L-asparaginyl-tRNA(Asn) + AMP + diphosphate + H(+). This Staphylococcus epidermidis (strain ATCC 35984 / DSM 28319 / BCRC 17069 / CCUG 31568 / BM 3577 / RP62A) protein is Asparagine--tRNA ligase.